The primary structure comprises 85 residues: CRISPR-associated endoribonuclease Cas2 2 (85 aa).

Position 8 (aspartate 8) interacts with Mg(2+).

The protein belongs to the CRISPR-associated endoribonuclease Cas2 protein family. Homodimer, forms a heterotetramer with a Cas1 homodimer. Mg(2+) serves as cofactor.

Its function is as follows. CRISPR (clustered regularly interspaced short palindromic repeat), is an adaptive immune system that provides protection against mobile genetic elements (viruses, transposable elements and conjugative plasmids). CRISPR clusters contain sequences complementary to antecedent mobile elements and target invading nucleic acids. CRISPR clusters are transcribed and processed into CRISPR RNA (crRNA). Functions as a ssRNA-specific endoribonuclease. Involved in the integration of spacer DNA into the CRISPR cassette. The polypeptide is CRISPR-associated endoribonuclease Cas2 2 (Chloroflexus aurantiacus (strain ATCC 29366 / DSM 635 / J-10-fl)).